The following is a 925-amino-acid chain: Neuropilin-2 (925 aa).

A signal peptide spans 1-22 (MDMFPLTWIFLALYFSGHKVRS). The Extracellular segment spans residues 23 to 858 (QQDPPCGGRL…EKSWLYTLDP (836 aa)). 3 disulfides stabilise this stretch: Cys-28–Cys-55, Cys-83–Cys-105, and Cys-149–Cys-175. CUB domains lie at 28-142 (CGGR…YEIF) and 149-267 (CSKN…YYLV). Residues Asn-152 and Asn-157 are each glycosylated (N-linked (GlcNAc...) asparagine). 3 residues coordinate Ca(2+): Glu-197, Asp-211, and Asp-252. Residues Cys-208 and Cys-230 are joined by a disulfide bond. 2 disulfide bridges follow: Cys-277–Cys-427 and Cys-434–Cys-592. F5/8 type C domains follow at residues 277-427 (CNAP…LFGC) and 434-592 (CSNM…VLGC). Over residues 297–310 (STFSDGRWTPQQSR) the composition is skewed to polar residues. Residues 297 to 317 (STFSDGRWTPQQSRLHGDDNG) are disordered. Residues 601–621 (VETLGPTVKSEETTTPYPMDE) form a disordered region. A glycan (N-linked (GlcNAc...) asparagine) is linked at Asn-629. The MAM domain maps to 642 to 802 (SGFNCNFDFP…TDVPLENCME (161 aa)). Residues 820–830 (YEDEIDDDYEG) are compositionally biased toward acidic residues. Residues 820–849 (YEDEIDDDYEGDWNNSSSTSGAGSPSSGKE) form a disordered region. N-linked (GlcNAc...) asparagine glycosylation is found at Asn-833 and Asn-834. Residues 835–846 (SSSTSGAGSPSS) show a composition bias toward low complexity. Residues 859–883 (ILITIIAMSSLGVLLGATCAGLLLY) traverse the membrane as a helical segment. At 884 to 925 (CTCSYSGLSSRSCTTLENYNFELYDGLKHKVKINHQKCCSEA) the chain is on the cytoplasmic side.

The protein belongs to the neuropilin family. As to quaternary structure, heterodimer with NRP1. Binds PLXNB1. Found in certain neuronal populations of the CNS, including dorsal root ganglia, and in other non-neuronal tissues including mesenchymal tissue lining in the ribs.

It is found in the membrane. Functionally, high affinity receptor for semaphorins 3C, 3F, VEGF-165 and VEGF-145 isoforms of VEGF, and the PLGF-2 isoform of PGF. This chain is Neuropilin-2 (Nrp2), found in Rattus norvegicus (Rat).